A 526-amino-acid polypeptide reads, in one-letter code: AAA ATPase forming ring-shaped complexes (526 aa).

The span at 1–18 shows a compositional bias: polar residues; the sequence is MGDMASSTDPAAHNSFSD. Residues 1–20 are disordered; it reads MGDMASSTDPAAHNSFSDFN. Residues 20–59 adopt a coiled-coil conformation; that stretch reads NREEMTRLADNVRSLQRTNQDLSARNTKLAEMLKSSRDKL. Position 257-262 (257-262) interacts with ATP; sequence GCGKTL.

This sequence belongs to the AAA ATPase family. Homohexamer. Assembles into a hexameric ring structure.

The protein is AAA ATPase forming ring-shaped complexes of Corynebacterium efficiens (strain DSM 44549 / YS-314 / AJ 12310 / JCM 11189 / NBRC 100395).